The chain runs to 365 residues: Peptide chain release factor 2 (365 aa).

Glutamine 252 is subject to N5-methylglutamine.

This sequence belongs to the prokaryotic/mitochondrial release factor family. Methylated by PrmC. Methylation increases the termination efficiency of RF2.

It localises to the cytoplasm. Its function is as follows. Peptide chain release factor 2 directs the termination of translation in response to the peptide chain termination codons UGA and UAA. The protein is Peptide chain release factor 2 of Shewanella woodyi (strain ATCC 51908 / MS32).